Reading from the N-terminus, the 439-residue chain is SH3 domain-containing protein 1 (439 aa).

The BAR domain maps to 32–263 (DAVVVDEEEL…MIAEEEAIGS (232 aa)). Residues 277 to 291 (SLPQQEPNSNSSGEI) show a composition bias toward polar residues. The tract at residues 277–362 (SLPQQEPNSN…SDDHHNHQLL (86 aa)) is disordered. Basic and acidic residues predominate over residues 318-358 (SPKDEMKSSPQEETKSNHQKEIKSSPQEEIKKSNGSDDHHN). An SH3 domain is found at 366 to 425 (DSYFLAKVVHPFDAQAPGELSLAVDDYVIVRQVAGTGWSEGEYKGKAGWFPSAYVEKQEK).

Interacts with the auxilin-like protein AUXI1. In terms of tissue distribution, highly expressed in flowers. Detected in seedlings, roots, leaves and stems.

It localises to the cytoplasmic vesicle. The protein localises to the clathrin-coated vesicle. The protein resides in the cell membrane. Its subcellular location is the golgi apparatus. It is found in the trans-Golgi network. It localises to the endoplasmic reticulum. In terms of biological role, lipid binding protein bound strongly to phosphatidic acid, phosphatidylinositol-4-phosphate and phosphatidylinositol-4,5-bisphosphate. Binds actin in vitro. Involved in trafficking and modification of clathrin-coated vesicles. The protein is SH3 domain-containing protein 1 (SH3P1) of Arabidopsis thaliana (Mouse-ear cress).